The sequence spans 258 residues: Acyl-[acyl-carrier-protein]--UDP-N-acetylglucosamine O-acyltransferase (258 aa).

The protein belongs to the transferase hexapeptide repeat family. LpxA subfamily. As to quaternary structure, homotrimer.

The protein localises to the cytoplasm. The enzyme catalyses a (3R)-hydroxyacyl-[ACP] + UDP-N-acetyl-alpha-D-glucosamine = a UDP-3-O-[(3R)-3-hydroxyacyl]-N-acetyl-alpha-D-glucosamine + holo-[ACP]. Its pathway is glycolipid biosynthesis; lipid IV(A) biosynthesis; lipid IV(A) from (3R)-3-hydroxytetradecanoyl-[acyl-carrier-protein] and UDP-N-acetyl-alpha-D-glucosamine: step 1/6. Its function is as follows. Involved in the biosynthesis of lipid A, a phosphorylated glycolipid that anchors the lipopolysaccharide to the outer membrane of the cell. The sequence is that of Acyl-[acyl-carrier-protein]--UDP-N-acetylglucosamine O-acyltransferase from Pseudomonas fluorescens (strain SBW25).